The primary structure comprises 257 residues: GTP cyclohydrolase III (257 aa).

Belongs to the archaeal-type GTP cyclohydrolase family.

The catalysed reaction is GTP + 3 H2O = 2-amino-5-formylamino-6-(5-phospho-D-ribosylamino)pyrimidin-4(3H)-one + 2 phosphate + 2 H(+). In terms of biological role, catalyzes the formation of 2-amino-5-formylamino-6-ribofuranosylamino-4(3H)-pyrimidinone ribonucleotide monophosphate and inorganic phosphate from GTP. Also has an independent pyrophosphate phosphohydrolase activity. The polypeptide is GTP cyclohydrolase III (Halorubrum lacusprofundi (strain ATCC 49239 / DSM 5036 / JCM 8891 / ACAM 34)).